The primary structure comprises 120 residues: NAD(P)H-quinone oxidoreductase subunit 3, chloroplastic (120 aa).

3 helical membrane-spanning segments follow: residues 9–29 (IFWA…LISG), 64–84 (MFAL…PWAM), and 88–108 (VLGV…ILGL).

Belongs to the complex I subunit 3 family. As to quaternary structure, NDH is composed of at least 16 different subunits, 5 of which are encoded in the nucleus.

The protein resides in the plastid. It localises to the chloroplast thylakoid membrane. It catalyses the reaction a plastoquinone + NADH + (n+1) H(+)(in) = a plastoquinol + NAD(+) + n H(+)(out). It carries out the reaction a plastoquinone + NADPH + (n+1) H(+)(in) = a plastoquinol + NADP(+) + n H(+)(out). Functionally, NDH shuttles electrons from NAD(P)H:plastoquinone, via FMN and iron-sulfur (Fe-S) centers, to quinones in the photosynthetic chain and possibly in a chloroplast respiratory chain. The immediate electron acceptor for the enzyme in this species is believed to be plastoquinone. Couples the redox reaction to proton translocation, and thus conserves the redox energy in a proton gradient. This chain is NAD(P)H-quinone oxidoreductase subunit 3, chloroplastic, found in Draba nemorosa (Woodland whitlowgrass).